Reading from the N-terminus, the 306-residue chain is Ornithine carbamoyltransferase (306 aa).

Residues 53 to 56 (STRT), Gln-80, Arg-104, and 131 to 134 (HPCQ) contribute to the carbamoyl phosphate site. L-ornithine-binding positions include Asn-162, Asp-219, and 223 to 224 (SM). Residues 259–260 (CL) and Arg-287 each bind carbamoyl phosphate.

The protein belongs to the aspartate/ornithine carbamoyltransferase superfamily. OTCase family.

Its subcellular location is the cytoplasm. It catalyses the reaction carbamoyl phosphate + L-ornithine = L-citrulline + phosphate + H(+). Its pathway is amino-acid biosynthesis; L-arginine biosynthesis; L-arginine from L-ornithine and carbamoyl phosphate: step 1/3. In terms of biological role, reversibly catalyzes the transfer of the carbamoyl group from carbamoyl phosphate (CP) to the N(epsilon) atom of ornithine (ORN) to produce L-citrulline. In Acinetobacter baumannii (strain ATCC 17978 / DSM 105126 / CIP 53.77 / LMG 1025 / NCDC KC755 / 5377), this protein is Ornithine carbamoyltransferase.